Consider the following 205-residue polypeptide: MTEFKSAPAYQEAKYLTSAAEFDQLPPDQGAEIAFIGRSNAGKSSALNIITGIKGLARTSKTPGRTQMINFFALNEHERLVDLPGYGYAKVPRMVQKRWEELVDSYLKNRRCLKGLVVVMDIRHPLKEMDEDVIEWAVNYDIPIHILLTKSDKLSQNAAKKTLGEVQTAISAYGEKLTLQLFSSHDRTGLDEVKAVLSQWFRSEP.

In terms of domain architecture, EngB-type G spans 29–203 (QGAEIAFIGR…KAVLSQWFRS (175 aa)). GTP is bound by residues 37–44 (GRSNAGKS), 64–68 (GRTQM), 82–85 (DLPG), 149–152 (TKSD), and 182–184 (FSS). Mg(2+)-binding residues include Ser44 and Thr66.

This sequence belongs to the TRAFAC class TrmE-Era-EngA-EngB-Septin-like GTPase superfamily. EngB GTPase family. Mg(2+) serves as cofactor.

Necessary for normal cell division and for the maintenance of normal septation. This chain is Probable GTP-binding protein EngB, found in Coxiella burnetii (strain RSA 493 / Nine Mile phase I).